The primary structure comprises 332 residues: Long form salivary protein D7L2 (332 aa).

Positions 1–21 (MFPPRKFLLSSFILAALHVTA) are cleaved as a signal peptide. Cystine bridges form between Cys40/Cys77 and Cys73/Cys133. Position 61 (Trp61) interacts with leukotriene E4. Leukotriene E4-binding residues include Gly157 and Lys176. Cystine bridges form between Cys184–Cys219, Cys200–Cys331, and Cys259–Cys278. Residues Glu185, Arg203, and His216 each contribute to the noradrenaline site. Residues Asp294 and Glu297 each coordinate noradrenaline.

The protein belongs to the PBP/GOBP family. In terms of assembly, interacts with human CD4. Saliva (at protein level). Female salivary gland (at protein level). Detected in the head and thorax of the female mosquitoes, where the salivary glands are located.

Its subcellular location is the secreted. In terms of biological role, modulates blood feeding of female mosquitoes on vertebrate species by binding and sequestering different mediators involved in the host response, such as biogenic amines and eicosanoids. Binds serotonin, histamine, tryptamine, noradrenaline, leukotriene B4, leukotriene C4, leukotriene D4, leukotriene E4 and U-46619, a stable analog of thromboxane A2. Does not bind adrenaline. Exhibits vasodilating activity. Inhibits agonist-induced platelet aggregation but not blood clotting. Functionally, (Microbial infection) Probably promotes Plasmodium gallinaceum oocyst development in mosquito midgut. This Aedes aegypti (Yellowfever mosquito) protein is Long form salivary protein D7L2.